The chain runs to 332 residues: Ferrochelatase (332 aa).

Fe cation contacts are provided by His201 and Glu283.

This sequence belongs to the ferrochelatase family.

Its subcellular location is the cytoplasm. It carries out the reaction heme b + 2 H(+) = protoporphyrin IX + Fe(2+). The protein operates within porphyrin-containing compound metabolism; protoheme biosynthesis; protoheme from protoporphyrin-IX: step 1/1. Catalyzes the ferrous insertion into protoporphyrin IX. This Francisella tularensis subsp. holarctica (strain FTNF002-00 / FTA) protein is Ferrochelatase.